We begin with the raw amino-acid sequence, 521 residues long: Bifunctional purine biosynthesis protein PurH (521 aa).

The MGS-like domain maps to 1–145 (MIKQALISVS…KNHRDVTVVV (145 aa)).

Belongs to the PurH family.

It carries out the reaction (6R)-10-formyltetrahydrofolate + 5-amino-1-(5-phospho-beta-D-ribosyl)imidazole-4-carboxamide = 5-formamido-1-(5-phospho-D-ribosyl)imidazole-4-carboxamide + (6S)-5,6,7,8-tetrahydrofolate. The catalysed reaction is IMP + H2O = 5-formamido-1-(5-phospho-D-ribosyl)imidazole-4-carboxamide. Its pathway is purine metabolism; IMP biosynthesis via de novo pathway; 5-formamido-1-(5-phospho-D-ribosyl)imidazole-4-carboxamide from 5-amino-1-(5-phospho-D-ribosyl)imidazole-4-carboxamide (10-formyl THF route): step 1/1. The protein operates within purine metabolism; IMP biosynthesis via de novo pathway; IMP from 5-formamido-1-(5-phospho-D-ribosyl)imidazole-4-carboxamide: step 1/1. The polypeptide is Bifunctional purine biosynthesis protein PurH (Burkholderia ambifaria (strain ATCC BAA-244 / DSM 16087 / CCUG 44356 / LMG 19182 / AMMD) (Burkholderia cepacia (strain AMMD))).